Consider the following 202-residue polypeptide: Dual-action ribosomal maturation protein DarP (202 aa).

A compositionally biased stretch (low complexity) spans methionine 1–asparagine 13. The segment at methionine 1 to methionine 39 is disordered.

Belongs to the DarP family.

It localises to the cytoplasm. Member of a network of 50S ribosomal subunit biogenesis factors which assembles along the 30S-50S interface, preventing incorrect 23S rRNA structures from forming. Promotes peptidyl transferase center (PTC) maturation. The chain is Dual-action ribosomal maturation protein DarP from Cupriavidus metallidurans (strain ATCC 43123 / DSM 2839 / NBRC 102507 / CH34) (Ralstonia metallidurans).